Consider the following 170-residue polypeptide: Adenine phosphoribosyltransferase (170 aa).

Belongs to the purine/pyrimidine phosphoribosyltransferase family. As to quaternary structure, homodimer.

Its subcellular location is the cytoplasm. It catalyses the reaction AMP + diphosphate = 5-phospho-alpha-D-ribose 1-diphosphate + adenine. Its pathway is purine metabolism; AMP biosynthesis via salvage pathway; AMP from adenine: step 1/1. Its function is as follows. Catalyzes a salvage reaction resulting in the formation of AMP, that is energically less costly than de novo synthesis. This is Adenine phosphoribosyltransferase from Symbiobacterium thermophilum (strain DSM 24528 / JCM 14929 / IAM 14863 / T).